The following is a 303-amino-acid chain: Mycothiol acetyltransferase (303 aa).

2 consecutive N-acetyltransferase domains span residues alanine 10–proline 156 and leucine 162–arginine 303. Glutamate 41 lines the 1D-myo-inositol 2-(L-cysteinylamino)-2-deoxy-alpha-D-glucopyranoside pocket. Leucine 86–valine 88 lines the acetyl-CoA pocket. The 1D-myo-inositol 2-(L-cysteinylamino)-2-deoxy-alpha-D-glucopyranoside site is built by glutamate 189, lysine 228, and glutamate 235. Residues leucine 239 to valine 241 and serine 246 to arginine 252 contribute to the acetyl-CoA site. Tyrosine 272 is a binding site for 1D-myo-inositol 2-(L-cysteinylamino)-2-deoxy-alpha-D-glucopyranoside. Asparagine 277–arginine 282 provides a ligand contact to acetyl-CoA.

This sequence belongs to the acetyltransferase family. MshD subfamily. Monomer.

The enzyme catalyses 1D-myo-inositol 2-(L-cysteinylamino)-2-deoxy-alpha-D-glucopyranoside + acetyl-CoA = mycothiol + CoA + H(+). In terms of biological role, catalyzes the transfer of acetyl from acetyl-CoA to desacetylmycothiol (Cys-GlcN-Ins) to form mycothiol. The chain is Mycothiol acetyltransferase from Kineococcus radiotolerans (strain ATCC BAA-149 / DSM 14245 / SRS30216).